We begin with the raw amino-acid sequence, 623 residues long: V-type proton ATPase catalytic subunit A (623 aa).

252–259 serves as a coordination point for ATP; that stretch reads GAFGCGKT.

This sequence belongs to the ATPase alpha/beta chains family. In terms of assembly, V-ATPase is a heteromultimeric enzyme composed of a peripheral catalytic V1 complex (main components: subunits A, B, C, D, E, and F) attached to an integral membrane V0 proton pore complex (main component: the proteolipid protein).

The catalysed reaction is ATP + H2O + 4 H(+)(in) = ADP + phosphate + 5 H(+)(out). In terms of biological role, catalytic subunit of the peripheral V1 complex of vacuolar ATPase. V-ATPase vacuolar ATPase is responsible for acidifying a variety of intracellular compartments in eukaryotic cells. The chain is V-type proton ATPase catalytic subunit A from Beta vulgaris (Sugar beet).